The sequence spans 65 residues: MRITEEGWAGEGKILVRYAIVEEIPGKLYHVVCPSLRFFEYCFDLNQCRKIALSLSEKVKDFLYV.

This is an uncharacterized protein from Saccharolobus islandicus (Sulfolobus islandicus).